We begin with the raw amino-acid sequence, 171 residues long: UPF0316 protein EAT1b_0871 (171 aa).

A run of 3 helical transmembrane segments spans residues 4 to 24 (ILLI…RTIM), 32 to 52 (IAGL…GIVF), and 57 to 77 (TVGM…GGFV).

The protein belongs to the UPF0316 family.

It is found in the cell membrane. The polypeptide is UPF0316 protein EAT1b_0871 (Exiguobacterium sp. (strain ATCC BAA-1283 / AT1b)).